A 625-amino-acid chain; its full sequence is RecQ-mediated genome instability protein 1 (625 aa).

Residue M1 is modified to N-acetylmethionine. S225 is modified (phosphoserine). The segment at 257–282 (LTANNDTSSERCFTTGSSSNTIPTRQ) is disordered. Residues S284 and S292 each carry the phosphoserine modification. Residues K334, K387, and K426 each participate in a glycyl lysine isopeptide (Lys-Gly) (interchain with G-Cter in SUMO2) cross-link.

Belongs to the RMI1 family. As to quaternary structure, component of the RMI complex, containing at least TOP3A, RMI1 and RMI2. The RMI complex interacts with BLM. Directly interacts with RMI2 and TOP3A. May bind DHJ. Interacts (via N-terminal region) with BLM; the interaction is direct.

The protein resides in the nucleus. In terms of biological role, essential component of the RMI complex, a complex that plays an important role in the processing of homologous recombination intermediates to limit DNA crossover formation in cells. Promotes TOP3A binding to double Holliday junctions (DHJ) and hence stimulates TOP3A-mediated dissolution. Required for BLM phosphorylation during mitosis. Within the BLM complex, required for BLM and TOP3A stability. The protein is RecQ-mediated genome instability protein 1 (RMI1) of Homo sapiens (Human).